Here is a 218-residue protein sequence, read N- to C-terminus: ATP phosphoribosyltransferase (218 aa).

It belongs to the ATP phosphoribosyltransferase family. Short subfamily. In terms of assembly, heteromultimer composed of HisG and HisZ subunits.

Its subcellular location is the cytoplasm. The catalysed reaction is 1-(5-phospho-beta-D-ribosyl)-ATP + diphosphate = 5-phospho-alpha-D-ribose 1-diphosphate + ATP. It functions in the pathway amino-acid biosynthesis; L-histidine biosynthesis; L-histidine from 5-phospho-alpha-D-ribose 1-diphosphate: step 1/9. Catalyzes the condensation of ATP and 5-phosphoribose 1-diphosphate to form N'-(5'-phosphoribosyl)-ATP (PR-ATP). Has a crucial role in the pathway because the rate of histidine biosynthesis seems to be controlled primarily by regulation of HisG enzymatic activity. This is ATP phosphoribosyltransferase from Synechococcus elongatus (strain ATCC 33912 / PCC 7942 / FACHB-805) (Anacystis nidulans R2).